The chain runs to 267 residues: Proteasome subunit alpha (267 aa).

The interval 231-267 (ETLLQERDSKESAESEEPKESEEGKKTGKKSDADSSD) is disordered. The span at 234 to 267 (LQERDSKESAESEEPKESEEGKKTGKKSDADSSD) shows a compositional bias: basic and acidic residues.

The protein belongs to the peptidase T1A family. As to quaternary structure, the 20S proteasome core is composed of 14 alpha and 14 beta subunits that assemble into four stacked heptameric rings, resulting in a barrel-shaped structure. The two inner rings, each composed of seven catalytic beta subunits, are sandwiched by two outer rings, each composed of seven alpha subunits. The catalytic chamber with the active sites is on the inside of the barrel. Has a gated structure, the ends of the cylinder being occluded by the N-termini of the alpha-subunits. Is capped by the proteasome-associated ATPase, ARC.

The protein resides in the cytoplasm. The protein operates within protein degradation; proteasomal Pup-dependent pathway. With respect to regulation, the formation of the proteasomal ATPase ARC-20S proteasome complex, likely via the docking of the C-termini of ARC into the intersubunit pockets in the alpha-rings, may trigger opening of the gate for substrate entry. Interconversion between the open-gate and close-gate conformations leads to a dynamic regulation of the 20S proteasome proteolysis activity. Functionally, component of the proteasome core, a large protease complex with broad specificity involved in protein degradation. This chain is Proteasome subunit alpha, found in Mycobacterium marinum (strain ATCC BAA-535 / M).